We begin with the raw amino-acid sequence, 645 residues long: MDWSEGDGSHSHGHMGDSCHGHGGGHSHGHGHSHGGSGFGGFMPAGFHGQLVPGPMDPTQQPRKSSHPEDSSSWDIIKATQFGALERCKELVEAGYDVRQPDKENVTLLHWAAINNRADIVKYYISKGAVIDQLGGDLNSTPLHWAIRQGHLSMVIQLMRYGADPSLADGEGYRGLHLAVLFQNMPIAAYLMAKGQEVDLPDLNGQTPLMLAAQKIIGPEPTNFLIKCNASVNAVDKVNRNSPLHCAVLAGNVDSVHILLEAGASVDMQNDNGHTAIDLAQQVHSPLLIHMLSVVKTERIKANSACLKLLNRYKVCLQSVFSVVVVGAFGAILDMRTESWLLKGILLACIMAVINLASRQLATVAVRSLIPSTGLIASVFWMVVTWVLWFLPDEPSAAVQMLFTVNITAVLYYYIRSCRTDPGHVKATEEEKKKNIVVLAEAGCLDPRIFCTSCMMRKPMRANHCFSCNACVAKQDHHSIWINGCIGARNHPFFVLFLVALNFLCIWMFYGSITYWSRHCPLHYSEEGIWGALTALMGCSPWLLYVFCFVFFHTTWASILLVLQLYQIAFLGLTTSERANLMHRQRKLPQAVSLRQNPFNHGVVKNLVNFFQWRFCGLCKPMVLDWTQQHPMGLGRDMFSSPDAV.

The disordered stretch occupies residues 1–73; sequence MDWSEGDGSH…KSSHPEDSSS (73 aa). The Cytoplasmic portion of the chain corresponds to 1–314; the sequence is MDWSEGDGSH…ACLKLLNRYK (314 aa). Over residues 7 to 20 the composition is skewed to basic and acidic residues; sequence DGSHSHGHMGDSCH. The span at 23–33 shows a compositional bias: basic residues; sequence GGGHSHGHGHS. Gly residues predominate over residues 34 to 43; the sequence is HGGSGFGGFM. ANK repeat units follow at residues 104-133, 138-167, 171-200, 204-234, and 239-268; these read ENVTLLHWAAINNRADIVKYYISKGAVIDQ, LNSTPLHWAIRQGHLSMVIQLMRYGADPSL, EGYRGLHLAVLFQNMPIAAYLMAKGQEVDL, NGQTPLMLAAQKIIGPEPTNFLIKCNASVNA, and NRNSPLHCAVLAGNVDSVHILLEAGASVDM. Residues 315-335 form a helical membrane-spanning segment; sequence VCLQSVFSVVVVGAFGAILDM. Position 336 (Arg336) is a topological domain, lumenal. Residues 337-357 form a helical membrane-spanning segment; it reads TESWLLKGILLACIMAVINLA. Over 358–369 the chain is Cytoplasmic; the sequence is SRQLATVAVRSL. A helical transmembrane segment spans residues 370–390; the sequence is IPSTGLIASVFWMVVTWVLWF. Residues 391–394 are Lumenal-facing; the sequence is LPDE. The chain crosses the membrane as a helical span at residues 395–415; the sequence is PSAAVQMLFTVNITAVLYYYI. Topologically, residues 416–492 are cytoplasmic; sequence RSCRTDPGHV…NGCIGARNHP (77 aa). The 51-residue stretch at 449–499 folds into the DHHC domain; it reads IFCTSCMMRKPMRANHCFSCNACVAKQDHHSIWINGCIGARNHPFFVLFLV. The helical transmembrane segment at 493-513 threads the bilayer; the sequence is FFVLFLVALNFLCIWMFYGSI. At 514–542 the chain is on the lumenal side; it reads TYWSRHCPLHYSEEGIWGALTALMGCSPW. Residues 543 to 563 traverse the membrane as a helical segment; it reads LLYVFCFVFFHTTWASILLVL. Residues 564 to 645 are Cytoplasmic-facing; sequence QLYQIAFLGL…RDMFSSPDAV (82 aa).

The protein belongs to the DHHC palmitoyltransferase family. AKR/ZDHHC17 subfamily.

Its subcellular location is the golgi apparatus membrane. It is found in the cytoplasmic vesicle membrane. Functionally, putative palmitoyltransferase that could catalyze the addition of palmitate onto various protein substrates. The protein is Putative palmitoyltransferase ZDHHC13 of Danio rerio (Zebrafish).